Reading from the N-terminus, the 344-residue chain is Phosphate acyltransferase (344 aa).

It belongs to the PlsX family. Homodimer. Probably interacts with PlsY.

Its subcellular location is the cytoplasm. The enzyme catalyses a fatty acyl-[ACP] + phosphate = an acyl phosphate + holo-[ACP]. It functions in the pathway lipid metabolism; phospholipid metabolism. Catalyzes the reversible formation of acyl-phosphate (acyl-PO(4)) from acyl-[acyl-carrier-protein] (acyl-ACP). This enzyme utilizes acyl-ACP as fatty acyl donor, but not acyl-CoA. The polypeptide is Phosphate acyltransferase (Sphingopyxis alaskensis (strain DSM 13593 / LMG 18877 / RB2256) (Sphingomonas alaskensis)).